The primary structure comprises 129 residues: Small ribosomal subunit protein uS9 (129 aa).

Belongs to the universal ribosomal protein uS9 family.

This chain is Small ribosomal subunit protein uS9, found in Helicobacter hepaticus (strain ATCC 51449 / 3B1).